Here is a 240-residue protein sequence, read N- to C-terminus: Putative cytochrome c-type biogenesis protein DbsD-like (240 aa).

A run of 6 helical transmembrane segments spans residues 32–52 (FVFF…ILPI), 74–94 (FFFC…ATLL), 104–124 (GIPV…LNIV), 149–169 (VGIG…LLIW), 176–196 (LFIG…PIII), and 218–238 (APFS…SSIL).

This sequence belongs to the DsbD family.

It localises to the plastid. The protein localises to the chloroplast membrane. Functionally, could be involved in cytochrome c synthesis. This is Putative cytochrome c-type biogenesis protein DbsD-like from Porphyra purpurea (Red seaweed).